The sequence spans 338 residues: DNA-directed RNA polymerase subunit alpha (338 aa).

Positions 1–230 (MRKITTSAYM…QQMSVFKGIL (230 aa)) are alpha N-terminal domain (alpha-NTD). Residues 247-338 (FSKLLSSVED…ELKSQMSAKE (92 aa)) are alpha C-terminal domain (alpha-CTD).

It belongs to the RNA polymerase alpha chain family. As to quaternary structure, homodimer. The RNAP catalytic core consists of 2 alpha, 1 beta, 1 beta' and 1 omega subunit. When a sigma factor is associated with the core the holoenzyme is formed, which can initiate transcription.

It catalyses the reaction RNA(n) + a ribonucleoside 5'-triphosphate = RNA(n+1) + diphosphate. Functionally, DNA-dependent RNA polymerase catalyzes the transcription of DNA into RNA using the four ribonucleoside triphosphates as substrates. This is DNA-directed RNA polymerase subunit alpha from Campylobacter concisus (strain 13826).